A 336-amino-acid chain; its full sequence is 4-aminobenzoate N-oxygenase (336 aa).

A 4-nitrobenzoate-binding site is contributed by Tyr-93. Residues Glu-101, Glu-136, His-139, and Glu-196 each coordinate Fe cation. A 4-nitrobenzoate-binding site is contributed by Asn-200. Residues His-223, Glu-227, and His-230 each contribute to the Fe cation site.

The protein belongs to the AurF N-oxygenase family. As to quaternary structure, homodimer. Requires Fe(2+) as cofactor.

It carries out the reaction 4-aminobenzoate + AH2 + 2 O2 = 4-nitrobenzoate + A + 2 H2O. The protein operates within antibiotic biosynthesis. Functionally, involved in the biosynthesis of the polyketide antibiotic aureothin. Catalyzes the oxidation of p-aminobenzoate (pABA) to p-nitrobenzoate (pNBA), an unusual polyketide synthase starter unit. Reaction mechanism involves the generation of a peroxodiiron(III/III) intermediate, which effects the initial oxidation of p-aminobenzoate to p-hydroxylaminobenzoate (Ar-NHOH). Ar-NHOH is then probably directly converted to the fully oxidized p-nitrobenzoate via a four-electron N-oxidation, bypassing the formation of a nitroso compound. This chain is 4-aminobenzoate N-oxygenase, found in Streptomyces thioluteus.